The primary structure comprises 1487 residues: Collagen alpha-1(II) chain (1487 aa).

An N-terminal signal peptide occupies residues 1 to 25 (MIRLGAPQTLVLLTLLVAAVLRCQG). Residues 26 to 181 (QDVQEAGSCV…PPGLGGNFAA (156 aa)) constitute a propeptide, N-terminal propeptide. The VWFC domain maps to 32–90 (GSCVQDGQRYNDKDVWKPEPCRICVCDTGTVLCDDIICEDVKDCLSPEIPFGECCPICP). Residues 97–1237 (SGQPGPKGQK…PREKGPDPLQ (1141 aa)) form a disordered region. Basic and acidic residues-rich tracts occupy residues 105–116 (QKGEPGDIKDIV) and 133–154 (PRGDRGDKGEKGAPGPRGRDGE). Pro residues predominate over residues 158–173 (PGNPGPPGPPGPPGPP). Position 190 is a 5-hydroxylysine (K190). Residue K190 is glycosylated (O-linked (Gal...) hydroxylysine). Residues 201–1214 (GPMGPMGPRG…PGPPGPPGPP (1014 aa)) are triple-helical region. The segment covering 208 to 217 (PRGPPGPAGA) has biased composition (pro residues). Over residues 218–239 (PGPQGFQGNPGEPGEPGVSGPM) the composition is skewed to low complexity. Positions 241 to 250 (PRGPPGPPGK) are enriched in pro residues. Basic and acidic residues predominate over residues 251 to 265 (PGDDGEAGKPGKAGE). Residues K287, K299, and K308 each carry the 5-hydroxylysine modification. 3 O-linked (Gal...) hydroxylysine glycosylation sites follow: K287, K299, and K308. 2 stretches are compositionally biased toward low complexity: residues 310-320 (ESGSPGENGSP) and 335-350 (TGPAGAAGARGNDGQP). A compositionally biased stretch (gly residues) spans 360 to 369 (GPAGGPGFPG). Composition is skewed to low complexity over residues 370–382 (APGAKGEAGPTGA) and 391–431 (PRGE…AGAP). K374 bears the 5-hydroxylysine mark. K374 carries an O-linked (Gal...) hydroxylysine glycan. The segment covering 433 to 442 (FPGPRGPPGP) has biased composition (pro residues). 5-hydroxylysine is present on residues K608 and K620. 2 O-linked (Gal...) hydroxylysine glycosylation sites follow: K608 and K620. Composition is skewed to low complexity over residues 622–631 (LPGAPGLRGL) and 656–667 (QGAPGPSGFQGL). A 4-hydroxyproline mark is found at P659 and P668. P670 carries the post-translational modification 3-hydroxyproline. A 4-hydroxyproline mark is found at P671 and P674. A compositionally biased stretch (basic and acidic residues) spans 764–775 (KGDRGDVGEKGP). 2 stretches are compositionally biased toward low complexity: residues 833–848 (AGFAGPPGADGQPGAK) and 877–913 (PTGVTGPKGARGAQGPPGATGFPGAAGRVGPPGSNGN). P907 is modified (3-hydroxyproline). P908, P914, and P920 each carry 4-hydroxyproline. Positions 1069–1079 (APGPPGSPGPA) are enriched in pro residues. Basic and acidic residues predominate over residues 1115–1129 (RGDKGEAGEPGERGL). Position 1130 is a 5-hydroxylysine (K1130). K1130 carries an O-linked (Gal...) hydroxylysine glycan. P1144 carries the post-translational modification 3-hydroxyproline. Low complexity predominate over residues 1148–1157 (SGDQGASGPA). Residue P1181 is modified to 4-hydroxyproline. Residue P1186 is modified to 3-hydroxyproline. P1187 carries the 4-hydroxyproline modification. The span at 1199 to 1216 (AGPPGNPGPPGPPGPPGP) shows a compositional bias: pro residues. Position 1201 is a 3-hydroxyproline (P1201). A 4-hydroxyproline mark is found at P1202 and P1205. At P1207 the chain carries 3-hydroxyproline. Residues P1208 and P1211 each carry the 4-hydroxyproline modification. The residue at position 1213 (P1213) is a 3-hydroxyproline. P1214 is modified (4-hydroxyproline). The tract at residues 1215–1241 (GPGIDMSAFAGLGPREKGPDPLQYMRA) is nonhelical region (C-terminal). One can recognise a Fibrillar collagen NC1 domain in the interval 1253 to 1487 (AEVDATLKSL…GVDIGPVCFL (235 aa)). Disulfide bonds link C1283-C1315, C1323-C1485, and C1393-C1438. D1301, N1303, Q1304, C1306, and D1309 together coordinate Ca(2+). N1388 carries an N-linked (GlcNAc...) asparagine glycan.

This sequence belongs to the fibrillar collagen family. As to quaternary structure, homotrimers of alpha 1(II) chains. The N-telopeptide is covalently linked to the helical COL2 region of alpha 1(IX), alpha 2(IX) and alpha 3(IX) chain. The C-telopeptide is covalently linked to an another site in the helical region of alpha 3(IX) COL2. Post-translationally, contains mostly 4-hydroxyproline. Prolines at the third position of the tripeptide repeating unit (G-X-P) are 4-hydroxylated in some or all of the chains. In terms of processing, contains 3-hydroxyproline at a few sites. This modification occurs on the first proline residue in the sequence motif Gly-Pro-Hyp, where Hyp is 4-hydroxyproline. Lysine residues at the third position of the tripeptide repeating unit (G-X-Y) are 5-hydroxylated in some or all of the chains. Post-translationally, O-glycosylated on hydroxylated lysine residues. The O-linked glycan consists of a Glc-Gal disaccharide. As to expression, isoform 2 is highly expressed in juvenile chondrocyte and low in fetal chondrocyte.

The protein localises to the secreted. Its subcellular location is the extracellular space. The protein resides in the extracellular matrix. Type II collagen is specific for cartilaginous tissues. It is essential for the normal embryonic development of the skeleton, for linear growth and for the ability of cartilage to resist compressive forces. The polypeptide is Collagen alpha-1(II) chain (Homo sapiens (Human)).